A 381-amino-acid chain; its full sequence is Cobalt-precorrin-5B C(1)-methyltransferase (381 aa).

It belongs to the CbiD family.

It catalyses the reaction Co-precorrin-5B + S-adenosyl-L-methionine = Co-precorrin-6A + S-adenosyl-L-homocysteine. It functions in the pathway cofactor biosynthesis; adenosylcobalamin biosynthesis; cob(II)yrinate a,c-diamide from sirohydrochlorin (anaerobic route): step 6/10. Its function is as follows. Catalyzes the methylation of C-1 in cobalt-precorrin-5B to form cobalt-precorrin-6A. The protein is Cobalt-precorrin-5B C(1)-methyltransferase of Prochlorococcus marinus (strain SARG / CCMP1375 / SS120).